The following is a 208-amino-acid chain: MQTLRRQAAWPCVPRGTLEVDFPPPLYSDDYLSQEGPRWTPAIKQATRWKYTPMGRDAAGQLWYTGLTNSDSREAWYTLPRAPDSPYREAYARWHGCYGHRERSLPSAYTQRLRETAWYDPIIPAQYTDPSTRWGSVLWKDRPIRGKEFAINRHRFGVEALWRASDYVRYLSAPQRPRYTAQNYRQWGLEPYCPATNQRPPPVYTPSH.

As to quaternary structure, microtubule inner protein component of sperm flagellar doublet microtubules. In terms of tissue distribution, expressed in trachea multiciliated cells.

It is found in the cytoplasm. It localises to the cytoskeleton. The protein localises to the cilium axoneme. The protein resides in the flagellum axoneme. Its function is as follows. Microtubule inner protein (MIP) part of the dynein-decorated doublet microtubules (DMTs) in cilia axoneme, which is required for motile cilia beating. Located at the center of the tektin bundle where may function to recruit tektins or stabilize the bundle. The chain is Tektin bundle-interacting protein 1 (TEKTIP1) from Bos taurus (Bovine).